The primary structure comprises 185 residues: Ribosome-recycling factor (185 aa).

Belongs to the RRF family.

The protein resides in the cytoplasm. Its function is as follows. Responsible for the release of ribosomes from messenger RNA at the termination of protein biosynthesis. May increase the efficiency of translation by recycling ribosomes from one round of translation to another. This is Ribosome-recycling factor from Buchnera aphidicola subsp. Acyrthosiphon pisum (strain 5A).